A 189-amino-acid chain; its full sequence is uncharacterized protein (189 aa).

Positions 31–54 (KCENIDDLANRYEVSKQEVEKVFK) form a coiled coil. EF-hand domains lie at 47–82 (QEVE…LGID), 83–118 (VSPK…KIKL), 120–155 (TVKA…TVST), and 157–189 (ITVK…CQTV). Residues Asp60, Asp62, Ser64, Thr66, Glu71, Asp96, Ser98, Asp100, Gln102, Glu107, Asp133, Asn135, Glu137, and Glu144 each coordinate Ca(2+).

This is an uncharacterized protein from Caenorhabditis elegans.